The primary structure comprises 192 residues: Signal peptidase complex catalytic subunit sec11 (192 aa).

The Cytoplasmic segment spans residues M1–Q18. The chain crosses the membrane as a helical; Signal-anchor for type II membrane protein span at residues V19–F39. At T40 to Q192 the chain is on the lumenal side. Residues S53, H92, and D133 each act as charge relay system in the active site. The C-terminal short (CTS) helix stretch occupies residues V177–L188.

The protein belongs to the peptidase S26B family. Component of the signal peptidase complex (SPC) composed of a catalytic subunit SEC11 and three accessory subunits SPC1, SPC2 and SPC3. The complex induces a local thinning of the ER membrane which is used to measure the length of the signal peptide (SP) h-region of protein substrates. This ensures the selectivity of the complex towards h-regions shorter than 18-20 amino acids. SPC associates with the translocon complex.

Its subcellular location is the endoplasmic reticulum membrane. It catalyses the reaction Cleavage of hydrophobic, N-terminal signal or leader sequences from secreted and periplasmic proteins.. Its function is as follows. Catalytic component of the signal peptidase complex (SPC) which catalyzes the cleavage of N-terminal signal sequences from nascent proteins as they are translocated into the lumen of the endoplasmic reticulum. Specifically cleaves N-terminal signal peptides that contain a hydrophobic alpha-helix (h-region) shorter than 18-20 amino acids. This Aspergillus fumigatus (strain CBS 144.89 / FGSC A1163 / CEA10) (Neosartorya fumigata) protein is Signal peptidase complex catalytic subunit sec11 (sec11).